A 466-amino-acid chain; its full sequence is ATP synthase subunit beta (466 aa).

153-160 lines the ATP pocket; it reads GGAGVGKT.

The protein belongs to the ATPase alpha/beta chains family. In terms of assembly, F-type ATPases have 2 components, CF(1) - the catalytic core - and CF(0) - the membrane proton channel. CF(1) has five subunits: alpha(3), beta(3), gamma(1), delta(1), epsilon(1). CF(0) has three main subunits: a(1), b(2) and c(9-12). The alpha and beta chains form an alternating ring which encloses part of the gamma chain. CF(1) is attached to CF(0) by a central stalk formed by the gamma and epsilon chains, while a peripheral stalk is formed by the delta and b chains.

It localises to the cell membrane. The catalysed reaction is ATP + H2O + 4 H(+)(in) = ADP + phosphate + 5 H(+)(out). In terms of biological role, produces ATP from ADP in the presence of a proton gradient across the membrane. The catalytic sites are hosted primarily by the beta subunits. The sequence is that of ATP synthase subunit beta from Clostridium acetobutylicum (strain ATCC 824 / DSM 792 / JCM 1419 / IAM 19013 / LMG 5710 / NBRC 13948 / NRRL B-527 / VKM B-1787 / 2291 / W).